A 396-amino-acid chain; its full sequence is ATP-dependent RNA helicase eIF4A (396 aa).

Residues 1-20 (MADKGLEDVPEGQIESNYDE) are disordered. Residues 23 to 51 (DSFDAMNLKAELLRGVYAYGFERPSAIQQ) carry the Q motif motif. Residues 54–224 (IMPVIKGHDV…TKFMRDPVRI (171 aa)) form the Helicase ATP-binding domain. 67 to 74 (AQSGTGKT) is an ATP binding site. The DEAD box motif lies at 172 to 175 (DEAD). A Helicase C-terminal domain is found at 235–396 (GIKQFYIAVE…EMPMNVADLI (162 aa)).

It belongs to the DEAD box helicase family. eIF4A subfamily. As to quaternary structure, component of the eIF4F complex, which composition varies with external and internal environmental conditions. It is composed of at least eIF4A, eIF4E and eIF4G.

The protein localises to the cytoplasm. It carries out the reaction ATP + H2O = ADP + phosphate + H(+). Functionally, ATP-dependent RNA helicase which is a subunit of the eIF4F complex involved in cap recognition and is required for mRNA binding to ribosome. In the current model of translation initiation, eIF4A unwinds RNA secondary structures in the 5'-UTR of mRNAs which is necessary to allow efficient binding of the small ribosomal subunit, and subsequent scanning for the initiator codon. This Phaeosphaeria nodorum (strain SN15 / ATCC MYA-4574 / FGSC 10173) (Glume blotch fungus) protein is ATP-dependent RNA helicase eIF4A (TIF1).